We begin with the raw amino-acid sequence, 552 residues long: Steroid transmembrane transporter SLC22A24 (552 aa).

Transmembrane regions (helical) follow at residues 16-36, 146-166, 178-200, 204-226, 234-254, 260-280, 350-370, 380-400, 407-427, 435-455, 474-492, and 496-516; these read FQIC…PNIV, SMVQ…YGHL, LCFL…LVYC, FLAG…EWTL, IMVL…LAFA, ILQL…WKMV, VFGL…LILN, LFQI…LLTL, ISQI…TFLP, VVLA…ASVH, VSGR…LMAY, and LPWI…LLLP.

Belongs to the major facilitator (TC 2.A.1) superfamily. Organic cation transporter (TC 2.A.1.19) family. As to expression, localized to the kidney. Highly specific expression pattern in the nephron, localized to segment 3 of the proximal tubule.

It localises to the cell membrane. It carries out the reaction estrone 3-sulfate(out) + glutarate(in) = estrone 3-sulfate(in) + glutarate(out). The catalysed reaction is 17beta-estradiol 17-O-(beta-D-glucuronate)(out) + glutarate(in) = 17beta-estradiol 17-O-(beta-D-glucuronate)(in) + glutarate(out). It catalyses the reaction taurocholate(out) + glutarate(in) = taurocholate(in) + glutarate(out). The enzyme catalyses 5alpha-androstane-3alpha,17beta-diol 3-O-(beta-D-glucuronate)(out) + glutarate(in) = 5alpha-androstane-3alpha,17beta-diol 3-O-(beta-D-glucuronate)(in) + glutarate(out). It carries out the reaction glycocholate(out) + glutarate(in) = glycocholate(in) + glutarate(out). The catalysed reaction is dehydroepiandrosterone 3-sulfate(out) + glutarate(in) = dehydroepiandrosterone 3-sulfate(in) + glutarate(out). It catalyses the reaction glutarate(in) + succinate(out) = glutarate(out) + succinate(in). Transport is chloride sensitive and transtimulated by glutaric acid. Transport is inhibited by anionic compounds from different chemical classes. Its function is as follows. Renal transmembrane organic anion/dicarboxylate exchanger that participates in the reabsorption of conjugated steroids including estradiol-17beta-D-glucuronide (or 17beta-estradiol 17-O-(beta-D-glucuronate)), androstanediol glucuronide (or 5alpha-androstane-3alpha,17beta-diol 3-O-(beta-D-glucuronate)), and estrone 3-sulfate, as well as bile acids taurocholate and glycocholate, driven by an outward gradient of dicarboxylates such as glutarate or succinate. Functionally, similar uptake function as Isoform 1. Lack of transporter activity. The chain is Steroid transmembrane transporter SLC22A24 from Homo sapiens (Human).